We begin with the raw amino-acid sequence, 159 residues long: Cyanate hydratase (159 aa).

Catalysis depends on residues arginine 103, glutamate 106, and serine 129.

This sequence belongs to the cyanase family.

It catalyses the reaction cyanate + hydrogencarbonate + 3 H(+) = NH4(+) + 2 CO2. Functionally, catalyzes the reaction of cyanate with bicarbonate to produce ammonia and carbon dioxide. This Blastomyces gilchristii (strain SLH14081) (Blastomyces dermatitidis) protein is Cyanate hydratase.